The sequence spans 1036 residues: Putative GPI-anchored protein pfl2 (1036 aa).

A signal peptide spans 1–23 (MKFFTASTLFLLAAQSLNSGVSA). Residues Asn66, Asn97, Asn165, Asn201, Asn233, Asn259, Asn277, Asn296, Asn312, Asn331, Asn347, Asn363, Asn379, Asn395, Asn410, Asn429, Asn445, Asn461, Asn477, Asn493, Asn509, Asn524, Asn543, Asn559, and Asn573 are each glycosylated (N-linked (GlcNAc...) asparagine). Disordered regions lie at residues 88–130 (SSSL…SSLA) and 147–183 (SSLA…SLSS). Over residues 243-585 (SSISSTVSSS…ITSSASGSTG (343 aa)) the composition is skewed to low complexity. Residues 243–710 (SSISSTVSSS…PLSNSTVAPT (468 aa)) form a disordered region. Polar residues predominate over residues 586-595 (EFTNTNSGNG). The span at 597–630 (VSGSVTTPTSTPLSNSTVAPTSTFTSSGFNTTSG) shows a compositional bias: low complexity. 9 N-linked (GlcNAc...) asparagine glycosylation sites follow: Asn611, Asn626, Asn642, Asn657, Asn673, Asn688, Asn704, Asn719, and Asn735. Residues 631-647 (LPTSSASTPLSNSTVAP) are compositionally biased toward polar residues. A compositionally biased stretch (low complexity) spans 648-692 (TSTFTSSGFNTTSGLPTSSASTPSSNSSIVPTSTFTSSGFNTTSG). Over residues 693-709 (LPTSSASTPLSNSTVAP) the composition is skewed to polar residues. Composition is skewed to low complexity over residues 722 to 831 (SGLP…TTAS), 838 to 862 (PTAA…ATYT), and 885 to 906 (IPVN…SFTP). 2 disordered regions span residues 722–862 (SGLP…ATYT) and 885–918 (IPVN…SYSN). Residues Asn918, Asn924, Asn930, Asn933, Asn939, Asn947, and Asn977 are each glycosylated (N-linked (GlcNAc...) asparagine). The interval 978–1011 (TTATSGSDDDVKTASTSSSTSYTSSSSSSSSTTS) is disordered. Residues 990-1011 (TASTSSSTSYTSSSSSSSSTTS) are compositionally biased toward low complexity. Ser1011 is lipidated: GPI-anchor amidated serine. Positions 1012 to 1036 (AASSKASVSMGLNGLMIAAVILLVA) are cleaved as a propeptide — removed in mature form.

The protein localises to the cell membrane. May be involved in agglutination during conjugation or other aspects of colony formation. Induces flocculation when overexpressed. The chain is Putative GPI-anchored protein pfl2 from Schizosaccharomyces pombe (strain 972 / ATCC 24843) (Fission yeast).